We begin with the raw amino-acid sequence, 603 residues long: NADPH-dependent diflavin oxidoreductase 1 (603 aa).

The 146-residue stretch at 10-155 (VTILYGSETG…YYSEWETNLL (146 aa)) folds into the Flavodoxin-like domain. Residues 16-21 (SETGNA), 64-67 (STTG), 102-111 (IGDSSYPKFN), and Glu137 each bind FMN. The FAD-binding FR-type domain occupies 209–451 (TNLLLGSVKA…HKSNLKFELP (243 aa)). FAD-binding positions include Arg359, 390-393 (RLFS), and 422-425 (GLCT). NADP(+) is bound by residues Thr465 and 521–522 (SR). Trp603 is a binding site for FAD.

The protein belongs to the NADPH-dependent diflavin oxidoreductase NDOR1 family. In the N-terminal section; belongs to the flavodoxin family. It in the C-terminal section; belongs to the flavoprotein pyridine nucleotide cytochrome reductase family. As to quaternary structure, interacts with DRE2; as part of the cytosolic iron-sulfur (Fe-S) protein assembly (CIA) machinery. FAD serves as cofactor. It depends on FMN as a cofactor.

The protein localises to the cytoplasm. Its subcellular location is the mitochondrion. It catalyses the reaction 2 oxidized [2Fe-2S]-[protein] + NADPH = 2 reduced [2Fe-2S]-[protein] + NADP(+) + H(+). NADPH-dependent reductase which is a central component of the cytosolic iron-sulfur (Fe-S) protein assembly (CIA) machinery. Transfers electrons from NADPH via its FAD and FMN prosthetic groups to the [2Fe-2S] cluster of DRE2, another key component of the CIA machinery. In turn, this reduced cluster provides electrons for assembly of cytosolic iron-sulfur cluster proteins. Positively controls H(2)O(2)-induced cell death. In Debaryomyces hansenii (strain ATCC 36239 / CBS 767 / BCRC 21394 / JCM 1990 / NBRC 0083 / IGC 2968) (Yeast), this protein is NADPH-dependent diflavin oxidoreductase 1.